The sequence spans 3994 residues: Hybrid PKS-NRPs synthetase opdA (3994 aa).

The Ketosynthase family 3 (KS3) domain maps to 6–442 (PEPIAIVGSS…GTNSHVILES (437 aa)). Active-site for beta-ketoacyl synthase activity residues include C179, H316, and H362. A malonyl-CoA:ACP transacylase (MAT) domain region spans residues 559–881 (VFTGQGAQWP…LKRDSNDVEA (323 aa)). Positions 951–1085 (HELLGRRTHD…GRLIIHLGET (135 aa)) are N-terminal hotdog fold. The dehydratase (DH) domain stretch occupies residues 951-1251 (HELLGRRTHD…SVKPMAPPTA (301 aa)). One can recognise a PKS/mFAS DH domain in the interval 951-1252 (HELLGRRTHD…VKPMAPPTAE (302 aa)). H983 functions as the Proton acceptor; for dehydratase activity in the catalytic mechanism. Residues 1100-1252 (LLSVDTDEGY…VKPMAPPTAE (153 aa)) form a C-terminal hotdog fold region. D1159 (proton donor; for dehydratase activity) is an active-site residue. Residues 1292-1593 (DRVVLYYVQR…VDLAFHDLPD (302 aa)) are methyltransferase (MT) domain. The tract at residues 2123–2297 (TYLMVGMAGG…ASIIHIGFVT (175 aa)) is ketoreductase (KR) domain. In terms of domain architecture, Carrier 1 spans 2406 to 2483 (EAVEITQKAF…QICTNAAKQL (78 aa)). The residue at position 2443 (S2443) is an O-(pantetheine 4'-phosphoryl)serine. The tract at residues 2486–2575 (QKGGQEPSEQ…FDPDDRDYNP (90 aa)) is disordered. Composition is skewed to polar residues over residues 2505 to 2514 (LHVSQGSLHT) and 2522 to 2546 (TETS…SVTD). Basic and acidic residues predominate over residues 2547–2556 (TVEKRDKGDI). A compositionally biased stretch (acidic residues) spans 2557 to 2570 (SVDEGPNEQFDPDD). Residues 2582-3007 (RLSSGQSRIY…SNTYMTVAKI (426 aa)) are condensation (C) domain. The adenylation (A) (KR) domain stretch occupies residues 3043-3436 (HETNREDLAI…DGSLVFLGRL (394 aa)). Residues 3553 to 3630 (PKLSLRQSEL…KMTMLVDLER (78 aa)) form the Carrier 2 domain. S3590 is modified (O-(pantetheine 4'-phosphoryl)serine). The tract at residues 3679 to 3895 (TGATGFLGGS…FDFKKVEEVA (217 aa)) is reductase (RED) domain.

In the C-terminal section; belongs to the NRP synthetase family. It depends on pantetheine 4'-phosphate as a cofactor.

It participates in secondary metabolite biosynthesis. Functionally, hybrid PKS-NRPS synthetase; part of the gene cluster that mediates the biosynthesis of oxopyrrolidines, polyketide-amino acid hybrid compounds with feature structures of tetramic acid. The polyketide chain is first assembled by the highly reducing PKS module of opdA using acetyl-CoA as the starter unit and five malonyl-CoA as the extender units. OpdC acts as trans-acting enoyl reductase and reduces the terminal alkenyl to alkane. The 17R in oxopyrrolidine A and 15R, 17S in oxopyrrolidine B are generated by non-stereospecific catalysis of the ketoreductase (KR) domain and enoyl reductases. Then the polyketides with specific configurations are transferred to the NRPS module of opdA and linked to L-tyrosine to form an amide bond. Finally, the oxopyrrolidines are offloaded through a Dieckmann cyclization catalyzed by the terminal D domain to give a tetramic acid moiety. This Penicillium oxalicum (strain 114-2 / CGMCC 5302) (Penicillium decumbens) protein is Hybrid PKS-NRPs synthetase opdA.